The sequence spans 199 residues: Acireductone dioxygenase 3 (199 aa).

The Fe(2+) site is built by H99, H101, E105, and H144. Ni(2+) contacts are provided by H99, H101, E105, and H144.

It belongs to the acireductone dioxygenase (ARD) family. It depends on Fe(2+) as a cofactor. Ni(2+) serves as cofactor.

The protein resides in the cytoplasm. It is found in the nucleus. It catalyses the reaction 1,2-dihydroxy-5-(methylsulfanyl)pent-1-en-3-one + O2 = 4-methylsulfanyl-2-oxobutanoate + formate + 2 H(+). It carries out the reaction 1,2-dihydroxy-5-(methylsulfanyl)pent-1-en-3-one + O2 = 3-(methylsulfanyl)propanoate + CO + formate + 2 H(+). The protein operates within amino-acid biosynthesis; L-methionine biosynthesis via salvage pathway; L-methionine from S-methyl-5-thio-alpha-D-ribose 1-phosphate: step 5/6. In terms of biological role, catalyzes 2 different reactions between oxygen and the acireductone 1,2-dihydroxy-3-keto-5-methylthiopentene (DHK-MTPene) depending upon the metal bound in the active site. Fe-containing acireductone dioxygenase (Fe-ARD) produces formate and 2-keto-4-methylthiobutyrate (KMTB), the alpha-ketoacid precursor of methionine in the methionine recycle pathway. Ni-containing acireductone dioxygenase (Ni-ARD) produces methylthiopropionate, carbon monoxide and formate, and does not lie on the methionine recycle pathway. This is Acireductone dioxygenase 3 (ARD3) from Arabidopsis thaliana (Mouse-ear cress).